The chain runs to 219 residues: Ribose-5-phosphate isomerase A (219 aa).

Residues 28 to 31, 81 to 84, and 94 to 97 each bind substrate; these read TGST, DGAD, and KGGG. The active-site Proton acceptor is E103. Residue K121 coordinates substrate.

The protein belongs to the ribose 5-phosphate isomerase family. In terms of assembly, homodimer.

It catalyses the reaction aldehydo-D-ribose 5-phosphate = D-ribulose 5-phosphate. It participates in carbohydrate degradation; pentose phosphate pathway; D-ribose 5-phosphate from D-ribulose 5-phosphate (non-oxidative stage): step 1/1. In terms of biological role, catalyzes the reversible conversion of ribose-5-phosphate to ribulose 5-phosphate. The chain is Ribose-5-phosphate isomerase A from Shewanella frigidimarina (strain NCIMB 400).